The primary structure comprises 412 residues: Protein Mb3436c (412 aa).

N6-(pyridoxal phosphate)lysine is present on Lys-227.

The protein belongs to the DegT/DnrJ/EryC1 family.

In Mycobacterium bovis (strain ATCC BAA-935 / AF2122/97), this protein is Protein Mb3436c.